The primary structure comprises 334 residues: Transposase for insertion sequence element IS1328 (334 aa).

This sequence belongs to the transposase IS1111A/IS1328/IS1533 family.

Functionally, required for the transposition of the insertion element. The sequence is that of Transposase for insertion sequence element IS1328 from Yersinia enterocolitica.